Here is a 496-residue protein sequence, read N- to C-terminus: Probable CtpA-like serine protease (496 aa).

A compositionally biased stretch (basic and acidic residues) spans Met1–Glu16. Residues Met1 to Asn27 form a disordered region. A compositionally biased stretch (polar residues) spans Ala18–Asn27. Residues Phe39–Ile59 traverse the membrane as a helical segment. Residues Thr124–Gly206 enclose the PDZ domain. Catalysis depends on charge relay system residues Ser329, Asp340, and Lys354.

This sequence belongs to the peptidase S41A family.

The protein resides in the cell membrane. This chain is Probable CtpA-like serine protease, found in Staphylococcus aureus (strain MSSA476).